A 47-amino-acid chain; its full sequence is Sperm protamine P1 (47 aa).

Belongs to the protamine P1 family. As to expression, testis.

The protein resides in the nucleus. Its subcellular location is the chromosome. Functionally, protamines substitute for histones in the chromatin of sperm during the haploid phase of spermatogenesis. They compact sperm DNA into a highly condensed, stable and inactive complex. The polypeptide is Sperm protamine P1 (PRM1) (Orcinus orca (Killer whale)).